The chain runs to 503 residues: Aromatase (503 aa).

Residues Asp-309 and Met-374 each contribute to the substrate site. Cys-437 contacts heme.

It belongs to the cytochrome P450 family. It depends on heme as a cofactor.

It is found in the membrane. It carries out the reaction testosterone + 3 reduced [NADPH--hemoprotein reductase] + 3 O2 = 17beta-estradiol + formate + 3 oxidized [NADPH--hemoprotein reductase] + 4 H2O + 4 H(+). The enzyme catalyses androst-4-ene-3,17-dione + 3 reduced [NADPH--hemoprotein reductase] + 3 O2 = estrone + formate + 3 oxidized [NADPH--hemoprotein reductase] + 4 H2O + 4 H(+). Functionally, catalyzes the formation of aromatic C18 estrogens from C19 androgens. This chain is Aromatase (CYP19A1), found in Callithrix jacchus (White-tufted-ear marmoset).